Reading from the N-terminus, the 201-residue chain is 3-isopropylmalate dehydratase small subunit (201 aa).

It belongs to the LeuD family. LeuD type 1 subfamily. Heterodimer of LeuC and LeuD.

The enzyme catalyses (2R,3S)-3-isopropylmalate = (2S)-2-isopropylmalate. Its pathway is amino-acid biosynthesis; L-leucine biosynthesis; L-leucine from 3-methyl-2-oxobutanoate: step 2/4. Its function is as follows. Catalyzes the isomerization between 2-isopropylmalate and 3-isopropylmalate, via the formation of 2-isopropylmaleate. The sequence is that of 3-isopropylmalate dehydratase small subunit from Rhodopseudomonas palustris (strain HaA2).